The primary structure comprises 248 residues: Isoprenyl transferase (248 aa).

Residue D23 is part of the active site. Residue D23 coordinates Mg(2+). Substrate contacts are provided by residues 24–27 (GNGR), W28, R36, H40, and 68–70 (STE). Catalysis depends on N71, which acts as the Proton acceptor. Residues W72, R74, R185, and 191 to 193 (RIS) each bind substrate. E204 contacts Mg(2+).

The protein belongs to the UPP synthase family. In terms of assembly, homodimer. It depends on Mg(2+) as a cofactor.

In terms of biological role, catalyzes the condensation of isopentenyl diphosphate (IPP) with allylic pyrophosphates generating different type of terpenoids. The polypeptide is Isoprenyl transferase (Neisseria meningitidis serogroup B (strain ATCC BAA-335 / MC58)).